The following is a 431-amino-acid chain: COBRA-like protein 4 (431 aa).

The first 20 residues, 1-20 (MRLLFSFCFFFFMIIFTATA), serve as a signal peptide directing secretion. N-linked (GlcNAc...) asparagine glycosylation is found at Asn29, Asn154, Asn162, Asn201, Asn226, Asn306, Asn321, and Asn340. Asn414 is lipidated: GPI-anchor amidated asparagine. A propeptide spans 415–431 (FASFSLTILLLLFISIW) (removed in mature form).

It belongs to the COBRA family. In terms of tissue distribution, expressed in roots, stems, leaves, flowers and siliques.

It is found in the cell membrane. The chain is COBRA-like protein 4 (COBL4) from Arabidopsis thaliana (Mouse-ear cress).